The following is a 456-amino-acid chain: GTP cyclohydrolase 1 (456 aa).

Zn(2+)-binding residues include cysteine 340, histidine 343, and cysteine 412.

The protein belongs to the GTP cyclohydrolase I family. Homodimer. Expressed in leaves and unripe fruits.

The enzyme catalyses GTP + H2O = 7,8-dihydroneopterin 3'-triphosphate + formate + H(+). It functions in the pathway cofactor biosynthesis; 7,8-dihydroneopterin triphosphate biosynthesis; 7,8-dihydroneopterin triphosphate from GTP: step 1/1. Its function is as follows. GTP cyclohydrolase 1 is the first enzyme in the biosynthetic pathway leading to folic acid. In Solanum lycopersicum (Tomato), this protein is GTP cyclohydrolase 1 (GCH1).